The primary structure comprises 245 residues: Phosphoribosylaminoimidazole-succinocarboxamide synthase (245 aa).

It belongs to the SAICAR synthetase family.

It carries out the reaction 5-amino-1-(5-phospho-D-ribosyl)imidazole-4-carboxylate + L-aspartate + ATP = (2S)-2-[5-amino-1-(5-phospho-beta-D-ribosyl)imidazole-4-carboxamido]succinate + ADP + phosphate + 2 H(+). The protein operates within purine metabolism; IMP biosynthesis via de novo pathway; 5-amino-1-(5-phospho-D-ribosyl)imidazole-4-carboxamide from 5-amino-1-(5-phospho-D-ribosyl)imidazole-4-carboxylate: step 1/2. The chain is Phosphoribosylaminoimidazole-succinocarboxamide synthase from Nostoc sp. (strain PCC 7120 / SAG 25.82 / UTEX 2576).